The sequence spans 308 residues: Spermidine synthase 2 (308 aa).

A PABS domain is found at 17–254 (PGWFSEISPL…GVIGFMLCST (238 aa)). Glutamine 48 provides a ligand contact to S-adenosyl 3-(methylsulfanyl)propylamine. Tyrosine 78 serves as a coordination point for putrescine. S-adenosyl 3-(methylsulfanyl)propylamine contacts are provided by residues glutamine 79, aspartate 103, glutamate 123, 154-155 (DG), and aspartate 173. Aspartate 173 (proton acceptor) is an active-site residue. Residues 173 to 176 (DSSD) and tyrosine 242 each bind putrescine.

The protein belongs to the spermidine/spermine synthase family.

It carries out the reaction S-adenosyl 3-(methylsulfanyl)propylamine + putrescine = S-methyl-5'-thioadenosine + spermidine + H(+). The protein operates within amine and polyamine biosynthesis; spermidine biosynthesis; spermidine from putrescine: step 1/1. The sequence is that of Spermidine synthase 2 from Hyoscyamus niger (Black henbane).